The sequence spans 157 residues: Cuticle protein 19 (157 aa).

A run of 6 repeats spans residues 11-14 (AAPA), 18-21 (AAPA), 24-27 (AAPA), 29-32 (AAPA), 39-42 (AAPA), and 47-50 (AAPA). The Chitin-binding type R&amp;R domain maps to 56 to 127 (YPKYAFEYGV…SGPSAHPAPA (72 aa)). Copy 7 of the repeat occupies 141 to 144 (AAPA).

Functionally, component of the cuticle of migratory locust which contains more than 100 different structural proteins. The chain is Cuticle protein 19 from Locusta migratoria (Migratory locust).